We begin with the raw amino-acid sequence, 151 residues long: 3-hydroxyacyl-[acyl-carrier-protein] dehydratase FabZ (151 aa).

Residue histidine 53 is part of the active site.

Belongs to the thioester dehydratase family. FabZ subfamily.

It is found in the cytoplasm. The enzyme catalyses a (3R)-hydroxyacyl-[ACP] = a (2E)-enoyl-[ACP] + H2O. Functionally, involved in unsaturated fatty acids biosynthesis. Catalyzes the dehydration of short chain beta-hydroxyacyl-ACPs and long chain saturated and unsaturated beta-hydroxyacyl-ACPs. The polypeptide is 3-hydroxyacyl-[acyl-carrier-protein] dehydratase FabZ (Erythrobacter litoralis (strain HTCC2594)).